Reading from the N-terminus, the 489-residue chain is Probable transporter MCH1 (489 aa).

A run of 12 helical transmembrane segments spans residues 34 to 54, 68 to 88, 94 to 114, 124 to 144, 156 to 175, 196 to 216, 262 to 282, 302 to 324, 335 to 355, 359 to 379, 403 to 423, and 463 to 483; these read ISLI…FTPV, IIGS…GYLA, VLLS…AATV, LAIS…TALL, LTIS…GSRV, FSFL…VVSI, ISTY…EMYI, VAIH…DFLV, LLSI…STFV, YYII…LYPT, IGST…CGVF, and SLII…ILRI.

The protein belongs to the major facilitator superfamily.

Its subcellular location is the vacuole membrane. Functionally, probable transporter. This Wickerhamomyces anomalus (Yeast) protein is Probable transporter MCH1 (MCH1).